A 52-amino-acid chain; its full sequence is ATP synthase protein 8 (52 aa).

A helical transmembrane segment spans residues 6–26 (PLLWLNLFLMFSATFVMFIVL).

This sequence belongs to the ATPase protein 8 family. In terms of assembly, F-type ATPases have 2 components, CF(1) - the catalytic core - and CF(0) - the membrane proton channel.

Its subcellular location is the mitochondrion membrane. In terms of biological role, mitochondrial membrane ATP synthase (F(1)F(0) ATP synthase or Complex V) produces ATP from ADP in the presence of a proton gradient across the membrane which is generated by electron transport complexes of the respiratory chain. F-type ATPases consist of two structural domains, F(1) - containing the extramembraneous catalytic core and F(0) - containing the membrane proton channel, linked together by a central stalk and a peripheral stalk. During catalysis, ATP synthesis in the catalytic domain of F(1) is coupled via a rotary mechanism of the central stalk subunits to proton translocation. Part of the complex F(0) domain. Minor subunit located with subunit a in the membrane. The polypeptide is ATP synthase protein 8 (MT-ATP8) (Penaeus monodon (Giant tiger prawn)).